We begin with the raw amino-acid sequence, 149 residues long: Deoxyuridine 5'-triphosphate nucleotidohydrolase (149 aa).

Residues 68 to 70, Asn-81, 85 to 87, and Met-95 each bind substrate; these read RSG and LID.

The protein belongs to the dUTPase family. Requires Mg(2+) as cofactor.

It carries out the reaction dUTP + H2O = dUMP + diphosphate + H(+). Its pathway is pyrimidine metabolism; dUMP biosynthesis; dUMP from dCTP (dUTP route): step 2/2. In terms of biological role, this enzyme is involved in nucleotide metabolism: it produces dUMP, the immediate precursor of thymidine nucleotides and it decreases the intracellular concentration of dUTP so that uracil cannot be incorporated into DNA. This is Deoxyuridine 5'-triphosphate nucleotidohydrolase from Polynucleobacter necessarius subsp. necessarius (strain STIR1).